Reading from the N-terminus, the 244-residue chain is Uridylate kinase (244 aa).

12–15 (KLSG) contacts ATP. Residues 20–25 (GERGVG) form an involved in allosteric activation by GTP region. Gly54 provides a ligand contact to UMP. ATP contacts are provided by Gly55 and Arg59. UMP is bound by residues Asp74 and 135-142 (IGSPYFST). Asn163, Tyr169, and Asp172 together coordinate ATP.

It belongs to the UMP kinase family. Homohexamer.

Its subcellular location is the cytoplasm. It carries out the reaction UMP + ATP = UDP + ADP. The protein operates within pyrimidine metabolism; CTP biosynthesis via de novo pathway; UDP from UMP (UMPK route): step 1/1. Allosterically activated by GTP. Inhibited by UTP. Catalyzes the reversible phosphorylation of UMP to UDP. In Streptococcus suis (strain 98HAH33), this protein is Uridylate kinase.